The primary structure comprises 201 residues: DeSI-like protein sdu1 (201 aa).

The 143-residue stretch at 1-143 folds into the PPPDE domain; that stretch reads MKVYINVYDL…AFPTITNALL (143 aa). Catalysis depends on residues histidine 29 and cysteine 105. The tract at residues 146 to 201 is disordered; it reads GQKNTSDVDDSSDSSSDVDEETLIVSKSKKAHKDIPKFSAPPPSADLNNLITDSLP. Residues 152-167 show a composition bias toward acidic residues; it reads DVDDSSDSSSDVDEET. Positions 191–201 are enriched in polar residues; the sequence is DLNNLITDSLP.

The protein belongs to the DeSI family.

The protein localises to the cytoplasm. Its function is as follows. Has a role in meiosis. The chain is DeSI-like protein sdu1 (sdu1) from Schizosaccharomyces pombe (strain 972 / ATCC 24843) (Fission yeast).